We begin with the raw amino-acid sequence, 146 residues long: Transcriptional regulator MraZ (146 aa).

SpoVT-AbrB domains are found at residues 5 to 52 (SAAL…PRAE) and 81 to 124 (AAEI…KEES).

It belongs to the MraZ family. In terms of assembly, forms oligomers.

Its subcellular location is the cytoplasm. The protein resides in the nucleoid. This Alcanivorax borkumensis (strain ATCC 700651 / DSM 11573 / NCIMB 13689 / SK2) protein is Transcriptional regulator MraZ.